The chain runs to 286 residues: 4-hydroxybenzoate octaprenyltransferase (286 aa).

A run of 7 helical transmembrane segments spans residues 21 to 40 (GTLL…AGGM), 95 to 115 (ILFV…NGLV), 142 to 162 (FLGI…TGEV), 167 to 187 (WWLF…YAMV), 210 to 230 (QIIG…GWSA), 235 to 255 (LYGL…MLIF), and 266 to 286 (FLNN…DYLI).

The protein belongs to the UbiA prenyltransferase family. The cofactor is Mg(2+).

It is found in the cell inner membrane. It catalyses the reaction all-trans-octaprenyl diphosphate + 4-hydroxybenzoate = 4-hydroxy-3-(all-trans-octaprenyl)benzoate + diphosphate. It functions in the pathway cofactor biosynthesis; ubiquinone biosynthesis. Functionally, catalyzes the prenylation of para-hydroxybenzoate (PHB) with an all-trans polyprenyl group. Mediates the second step in the final reaction sequence of ubiquinone-8 (UQ-8) biosynthesis, which is the condensation of the polyisoprenoid side chain with PHB, generating the first membrane-bound Q intermediate 3-octaprenyl-4-hydroxybenzoate. This chain is 4-hydroxybenzoate octaprenyltransferase, found in Shewanella baltica (strain OS155 / ATCC BAA-1091).